Reading from the N-terminus, the 79-residue chain is Small ribosomal subunit protein bS18 (79 aa).

This sequence belongs to the bacterial ribosomal protein bS18 family. As to quaternary structure, part of the 30S ribosomal subunit. Forms a tight heterodimer with protein bS6.

Binds as a heterodimer with protein bS6 to the central domain of the 16S rRNA, where it helps stabilize the platform of the 30S subunit. The polypeptide is Small ribosomal subunit protein bS18 (Bradyrhizobium diazoefficiens (strain JCM 10833 / BCRC 13528 / IAM 13628 / NBRC 14792 / USDA 110)).